A 113-amino-acid polypeptide reads, in one-letter code: B-type lectin plumieribetin (113 aa).

In terms of domain architecture, Bulb-type lectin spans 1–109 (NYLSKNDELR…STEIWNSDKN (109 aa)).

In terms of assembly, homotetramer. Interacts with alpha-1-beta-1 integrin (ITGA1/ITGB1). Not glycosylated. Not N-glycosylated and not O-glycosylated with the mostcommon O-linked glycoconjugates. Post-translationally, the N-terminus is blocked. As to expression, expressed by sting venom glands and is also found in skin mucus. Not found in other tissues tested.

The protein localises to the secreted. May contribute to some of the local and systemic effects of envenomation by the scorpionfish. Preferentially recognizes mannose-containing carbohydrate structures, but its interaction with single mannose residues is weak. Potently inhibits alpha-1-beta-1 integrin (ITGA1/ITGB1) binding to basement membrane collagen IV in a divalent cation-independent manner. In addition, moderately inhibits both laminin binding integrins alpha-3-beta-1 (ITGA3/ITGB1) and alpha-7-beta-1 (ITGA7/ITGB1). Weakens the cell-collagen contacts, reduces cell spreading, and alters the actin cytoskeleton, after the compensating alpha-2-beta-1 integrin is blocked. On the cellular level, fails to completely detach hepatocarcinoma HepG2 cells and primary arterial smooth muscle cells from the collagen IV fragment CB3. The chain is B-type lectin plumieribetin from Scorpaena plumieri (Spotted scorpionfish).